A 155-amino-acid chain; its full sequence is Small ribosomal subunit protein uS7 (155 aa).

This sequence belongs to the universal ribosomal protein uS7 family. As to quaternary structure, part of the 30S ribosomal subunit. Contacts proteins S9 and S11.

In terms of biological role, one of the primary rRNA binding proteins, it binds directly to 16S rRNA where it nucleates assembly of the head domain of the 30S subunit. Is located at the subunit interface close to the decoding center, probably blocks exit of the E-site tRNA. The sequence is that of Small ribosomal subunit protein uS7 from Chloroherpeton thalassium (strain ATCC 35110 / GB-78).